The primary structure comprises 146 residues: Snaclec jerdonibitin subunit beta (146 aa).

The first 23 residues, 1-23 (MGRFIFVSFGLLVVFLSLSGTGA), serve as a signal peptide directing secretion. 3 disulfide bridges follow: Cys-25–Cys-36, Cys-53–Cys-142, and Cys-119–Cys-134. The region spanning 32 to 143 (YEGHCYRVFQ…CSKTYPFVCK (112 aa)) is the C-type lectin domain.

The protein belongs to the snaclec family. In terms of assembly, heterodimer of subunits alpha and beta; disulfide-linked. As to expression, expressed by the venom gland.

It is found in the secreted. Snaclec that dose-dependently inhibits platelet aggregation induced by ristocetin or low-dose thrombin, but not by high-dose thrombin. Binds to GPIbalpha (GP1BA). In vivo, also dose-dependently induces thrombocytopenia of mice and platelet counts remains at very low level even after 18 hours intravenous injection. This Protobothrops jerdonii (Jerdon's pitviper) protein is Snaclec jerdonibitin subunit beta.